Consider the following 412-residue polypeptide: Phosphate-repressible acid phosphatase (412 aa).

Residues 1–19 form the signal peptide; it reads MLTKQTLLAFVGALALATG. Residues N74, N121, N186, and N208 are each glycosylated (N-linked (GlcNAc...) asparagine). The Proton donor role is filled by D215. N217, N332, and N343 each carry an N-linked (GlcNAc...) asparagine glycan.

Post-translationally, the N-terminus is blocked.

It is found in the secreted. The enzyme catalyses a phosphate monoester + H2O = an alcohol + phosphate. This is Phosphate-repressible acid phosphatase (PHOA) from Penicillium chrysogenum (Penicillium notatum).